A 94-amino-acid polypeptide reads, in one-letter code: Probable Fe(2+)-trafficking protein (94 aa).

Belongs to the Fe(2+)-trafficking protein family.

Could be a mediator in iron transactions between iron acquisition and iron-requiring processes, such as synthesis and/or repair of Fe-S clusters in biosynthetic enzymes. In Alcanivorax borkumensis (strain ATCC 700651 / DSM 11573 / NCIMB 13689 / SK2), this protein is Probable Fe(2+)-trafficking protein.